The chain runs to 135 residues: CTP pyrophosphohydrolase (135 aa).

Residues 2 to 127 (KMIEVVAAII…DIPLLEAFMA (126 aa)) form the Nudix hydrolase domain. Residues 34-39 (FAGGKV), arginine 72, and aspartate 118 each bind substrate. Residues 37–58 (GKVEPDESQRQALVRELREELG) carry the Nudix box motif.

This sequence belongs to the Nudix hydrolase family. In terms of assembly, monomer. Requires Mg(2+) as cofactor. Mn(2+) serves as cofactor.

It catalyses the reaction CTP + H2O = CMP + diphosphate + H(+). The catalysed reaction is dCTP + H2O = dCMP + diphosphate + H(+). Functionally, hydrolase with a preference for pyrimidine substrates. Has high activity with 5-methyl-dCTP, and much lower activity with CTP, dCTP, 5-hydroxy-dCTP, 2-hydroxy-dATP and 8-hydroxy-dGTP. This chain is CTP pyrophosphohydrolase (nudG), found in Escherichia coli (strain K12).